Consider the following 221-residue polypeptide: CASP-like protein 4C1 (221 aa).

The disordered stretch occupies residues 1-21 (MDSPESSDRGLNPMTPDHGGH). Residues 1-54 (MDSPESSDRGLNPMTPDHGGHNGKVVHYFGQGVEGGPASPRKLGHGHLHPKANT) lie on the Cytoplasmic side of the membrane. The chain crosses the membrane as a helical span at residues 55 to 75 (ALLLLRLLTFAFSLASLVIMA). Topologically, residues 76–101 (TNSATTTATAGRHRTVNWVDFDTYRY) are extracellular. The chain crosses the membrane as a helical span at residues 102 to 122 (VLAACAIVCLYSFAEIGLGLW). Residues 123 to 144 (YLLKGRMVMPESMAHWFDFGHD) lie on the Cytoplasmic side of the membrane. Residues 145–165 (QGFAYLIFSACSGATAVAHNL) traverse the membrane as a helical segment. Residues 166–189 (RERHILIHGMYGCDEANSFCMKAE) are Extracellular-facing. A helical transmembrane segment spans residues 190-210 (ISIGLAFGAFLFIALSSLLSG). Topologically, residues 211-221 (YRLVKWLILGP) are cytoplasmic.

It belongs to the Casparian strip membrane proteins (CASP) family. In terms of assembly, homodimer and heterodimers.

The protein resides in the cell membrane. The sequence is that of CASP-like protein 4C1 from Pteridium aquilinum subsp. aquilinum (Bracken fern).